A 401-amino-acid polypeptide reads, in one-letter code: Exodeoxyribonuclease 7 large subunit (401 aa).

This sequence belongs to the XseA family. In terms of assembly, heterooligomer composed of large and small subunits.

Its subcellular location is the cytoplasm. It catalyses the reaction Exonucleolytic cleavage in either 5'- to 3'- or 3'- to 5'-direction to yield nucleoside 5'-phosphates.. Bidirectionally degrades single-stranded DNA into large acid-insoluble oligonucleotides, which are then degraded further into small acid-soluble oligonucleotides. This Clostridium botulinum (strain Langeland / NCTC 10281 / Type F) protein is Exodeoxyribonuclease 7 large subunit.